Here is a 102-residue protein sequence, read N- to C-terminus: FMRFamide-like neuropeptides 9 (102 aa).

A signal peptide spans methionine 1–alanine 19. The propeptide occupies tyrosine 20 to glutamate 63. Position 72 is a phenylalanine amide (phenylalanine 72). Positions arginine 75–aspartate 90 are excised as a propeptide. Phenylalanine 99 is modified (phenylalanine amide).

Belongs to the FARP (FMRFamide related peptide) family. As to expression, each flp gene is expressed in a distinct set of neurons.

It localises to the secreted. Its function is as follows. FMRFamides and FMRFamide-like peptides are neuropeptides. KPSFVRF-amide: Has no effect on somatic body wall muscle, inhibits contraction of vaginal vera muscle, and inhibits the activity of the dissected pharyngeal myogenic muscle system. Acts as a ligand for the npr-22 receptor in vitro. This is FMRFamide-like neuropeptides 9 from Caenorhabditis elegans.